A 265-amino-acid chain; its full sequence is Mlc titration factor A (265 aa).

His-111, His-148, His-152, and Glu-211 together coordinate Zn(2+).

The protein belongs to the MtfA family. As to quaternary structure, interacts with Mlc. Requires Zn(2+) as cofactor.

The protein resides in the cytoplasm. In terms of biological role, involved in the modulation of the activity of the glucose-phosphotransferase system (glucose-PTS). Interacts with the transcriptional repressor Mlc, preventing its interaction with DNA and leading to the modulation of expression of genes regulated by Mlc, including ptsG, which encodes the PTS system glucose-specific EIICB component. Shows zinc-dependent metallopeptidase activity. This is Mlc titration factor A from Escherichia fergusonii.